Here is a 234-residue protein sequence, read N- to C-terminus: Large ribosomal subunit protein uL1 (234 aa).

It belongs to the universal ribosomal protein uL1 family. In terms of assembly, part of the 50S ribosomal subunit.

In terms of biological role, binds directly to 23S rRNA. The L1 stalk is quite mobile in the ribosome, and is involved in E site tRNA release. Functionally, protein L1 is also a translational repressor protein, it controls the translation of the L11 operon by binding to its mRNA. In Pectobacterium atrosepticum (strain SCRI 1043 / ATCC BAA-672) (Erwinia carotovora subsp. atroseptica), this protein is Large ribosomal subunit protein uL1.